The primary structure comprises 308 residues: uncharacterized protein (308 aa).

The signal sequence occupies residues 1 to 18; that stretch reads MKIILLFLAALASFTVHA.

This is an uncharacterized protein from Escherichia coli (strain K12).